The chain runs to 189 residues: Large ribosomal subunit protein bL9 (189 aa).

The protein belongs to the bacterial ribosomal protein bL9 family.

Its function is as follows. Binds to the 23S rRNA. The chain is Large ribosomal subunit protein bL9 from Beijerinckia indica subsp. indica (strain ATCC 9039 / DSM 1715 / NCIMB 8712).